The chain runs to 227 residues: Cytochrome c oxidase subunit 2 (227 aa).

At 1-14 (MAYPMQLGLQDATS) the chain is on the mitochondrial intermembrane side. The chain crosses the membrane as a helical span at residues 15–45 (PIMEELTDFHDHTLMIVFLISTLVLYIISMM). At 46 to 59 (LTTKLTHTSTMDAQ) the chain is on the mitochondrial matrix side. The helical transmembrane segment at 60 to 87 (EVETIWTVLPAVILVMIALPSLRILYMM) threads the bilayer. Topologically, residues 88–227 (DEINDPYLTV…QFESWASSMT (140 aa)) are mitochondrial intermembrane. His-161, Cys-196, Glu-198, Cys-200, His-204, and Met-207 together coordinate Cu cation. Glu-198 contributes to the Mg(2+) binding site.

This sequence belongs to the cytochrome c oxidase subunit 2 family. Component of the cytochrome c oxidase (complex IV, CIV), a multisubunit enzyme composed of 14 subunits. The complex is composed of a catalytic core of 3 subunits MT-CO1, MT-CO2 and MT-CO3, encoded in the mitochondrial DNA, and 11 supernumerary subunits COX4I, COX5A, COX5B, COX6A, COX6B, COX6C, COX7A, COX7B, COX7C, COX8 and NDUFA4, which are encoded in the nuclear genome. The complex exists as a monomer or a dimer and forms supercomplexes (SCs) in the inner mitochondrial membrane with NADH-ubiquinone oxidoreductase (complex I, CI) and ubiquinol-cytochrome c oxidoreductase (cytochrome b-c1 complex, complex III, CIII), resulting in different assemblies (supercomplex SCI(1)III(2)IV(1) and megacomplex MCI(2)III(2)IV(2)). Found in a complex with TMEM177, COA6, COX18, COX20, SCO1 and SCO2. Interacts with TMEM177 in a COX20-dependent manner. Interacts with COX20. Interacts with COX16. It depends on Cu cation as a cofactor.

It localises to the mitochondrion inner membrane. It catalyses the reaction 4 Fe(II)-[cytochrome c] + O2 + 8 H(+)(in) = 4 Fe(III)-[cytochrome c] + 2 H2O + 4 H(+)(out). In terms of biological role, component of the cytochrome c oxidase, the last enzyme in the mitochondrial electron transport chain which drives oxidative phosphorylation. The respiratory chain contains 3 multisubunit complexes succinate dehydrogenase (complex II, CII), ubiquinol-cytochrome c oxidoreductase (cytochrome b-c1 complex, complex III, CIII) and cytochrome c oxidase (complex IV, CIV), that cooperate to transfer electrons derived from NADH and succinate to molecular oxygen, creating an electrochemical gradient over the inner membrane that drives transmembrane transport and the ATP synthase. Cytochrome c oxidase is the component of the respiratory chain that catalyzes the reduction of oxygen to water. Electrons originating from reduced cytochrome c in the intermembrane space (IMS) are transferred via the dinuclear copper A center (CU(A)) of subunit 2 and heme A of subunit 1 to the active site in subunit 1, a binuclear center (BNC) formed by heme A3 and copper B (CU(B)). The BNC reduces molecular oxygen to 2 water molecules using 4 electrons from cytochrome c in the IMS and 4 protons from the mitochondrial matrix. The sequence is that of Cytochrome c oxidase subunit 2 (MT-CO2) from Cratogeomys bursarius (Plains pocket gopher).